A 157-amino-acid polypeptide reads, in one-letter code: Vitamin K-dependent protein C (157 aa).

The region spanning 1-157 (ENGEVDLDIQ…GCGRLHNYGV (157 aa)) is the Peptidase S1 domain. Residue Asn-17 is glycosylated (N-linked (GlcNAc...) asparagine). The Charge relay system role is filled by Asp-26. Residue Asn-78 is glycosylated (N-linked (GlcNAc...) asparagine). 2 disulfide bridges follow: Cys-96/Cys-110 and Cys-121/Cys-149. The active-site Charge relay system is the Ser-125.

The protein belongs to the peptidase S1 family. In terms of tissue distribution, plasma; synthesized in the liver.

The protein resides in the secreted. It localises to the golgi apparatus. Its subcellular location is the endoplasmic reticulum. The catalysed reaction is Degradation of blood coagulation factors Va and VIIIa.. Protein C is a vitamin K-dependent serine protease that regulates blood coagulation by inactivating factors Va and VIIIa in the presence of calcium ions and phospholipids. Exerts a protective effect on the endothelial cell barrier function. In Equus caballus (Horse), this protein is Vitamin K-dependent protein C (PROC).